A 492-amino-acid polypeptide reads, in one-letter code: NADH-quinone oxidoreductase subunit N (492 aa).

14 helical membrane passes run 18-38 (ILPM…NAFT), 45-65 (LNMF…LGLE), 80-100 (LSLV…FLAL), 108-128 (FQTA…QFMV), 133-153 (LLLM…LMAL), 167-187 (FTMG…FYLL), 209-229 (MLFA…VSLV), 250-270 (ISIV…GAFI), 277-297 (VEDI…LIAL), 305-325 (MLAY…FIHT), 333-353 (FVYW…LWLL), 381-401 (VAIL…FSVF), 415-435 (NHIL…FYYF), and 464-484 (MPIY…VFMM).

This sequence belongs to the complex I subunit 2 family. As to quaternary structure, NDH-1 is composed of 14 different subunits. Subunits NuoA, H, J, K, L, M, N constitute the membrane sector of the complex.

The protein resides in the cell inner membrane. The enzyme catalyses a quinone + NADH + 5 H(+)(in) = a quinol + NAD(+) + 4 H(+)(out). NDH-1 shuttles electrons from NADH, via FMN and iron-sulfur (Fe-S) centers, to quinones in the respiratory chain. The immediate electron acceptor for the enzyme in this species is believed to be ubiquinone. Couples the redox reaction to proton translocation (for every two electrons transferred, four hydrogen ions are translocated across the cytoplasmic membrane), and thus conserves the redox energy in a proton gradient. This Helicobacter acinonychis (strain Sheeba) protein is NADH-quinone oxidoreductase subunit N.